Here is a 363-residue protein sequence, read N- to C-terminus: Putative agmatine deiminase 1 (363 aa).

The Amidino-cysteine intermediate role is filled by Cys-356.

This sequence belongs to the agmatine deiminase family.

The catalysed reaction is agmatine + H2O = N-carbamoylputrescine + NH4(+). The chain is Putative agmatine deiminase 1 from Listeria monocytogenes serovar 1/2a (strain ATCC BAA-679 / EGD-e).